The primary structure comprises 316 residues: Small ribosomal subunit biogenesis GTPase RsgA (316 aa).

In terms of domain architecture, CP-type G spans 83–248 (DQYKSKLFAA…LIDSPGFQEF (166 aa)). Residues 131–134 (NKTD) and 185–193 (GQSGMGKST) each bind GTP. Zn(2+)-binding residues include Cys-272, Cys-277, His-279, and Cys-285.

The protein belongs to the TRAFAC class YlqF/YawG GTPase family. RsgA subfamily. Monomer. Associates with 30S ribosomal subunit, binds 16S rRNA. Requires Zn(2+) as cofactor.

The protein localises to the cytoplasm. In terms of biological role, one of several proteins that assist in the late maturation steps of the functional core of the 30S ribosomal subunit. Helps release RbfA from mature subunits. May play a role in the assembly of ribosomal proteins into the subunit. Circularly permuted GTPase that catalyzes slow GTP hydrolysis, GTPase activity is stimulated by the 30S ribosomal subunit. This chain is Small ribosomal subunit biogenesis GTPase RsgA, found in Paraburkholderia phytofirmans (strain DSM 17436 / LMG 22146 / PsJN) (Burkholderia phytofirmans).